Reading from the N-terminus, the 278-residue chain is Alcohol dehydrogenase-related 31 kDa protein (278 aa).

11 to 34 (YVADCGGIALETSKVLMTKNIAKL) serves as a coordination point for NAD(+). Substrate is bound at residue S139. The Proton acceptor role is filled by Y152.

It belongs to the short-chain dehydrogenases/reductases (SDR) family.

The protein is Alcohol dehydrogenase-related 31 kDa protein (Adhr) of Drosophila persimilis (Fruit fly).